The chain runs to 264 residues: NAD-capped RNA hydrolase NudC (264 aa).

Cys-99 and Cys-102 together coordinate Zn(2+). Residue Glu-112 coordinates substrate. Zn(2+) is bound by residues Cys-117 and Cys-120. A substrate-binding site is contributed by Tyr-125. In terms of domain architecture, Nudix hydrolase spans 126–253; the sequence is PVICPSIIVA…TIARKLIHVT (128 aa). The a divalent metal cation site is built by Ala-162, Glu-178, and Glu-182. The short motif at 163-184 is the Nudix box element; it reads GFVEVGETFEQAVQREVFEETG. 196–203 is a substrate binding site; sequence QPWAFPNS. Glu-223 is a binding site for a divalent metal cation. Ala-246 provides a ligand contact to substrate.

Belongs to the Nudix hydrolase family. NudC subfamily. In terms of assembly, homodimer. Mg(2+) is required as a cofactor. Mn(2+) serves as cofactor. Requires Zn(2+) as cofactor.

It catalyses the reaction a 5'-end NAD(+)-phospho-ribonucleoside in mRNA + H2O = a 5'-end phospho-adenosine-phospho-ribonucleoside in mRNA + beta-nicotinamide D-ribonucleotide + 2 H(+). The enzyme catalyses NAD(+) + H2O = beta-nicotinamide D-ribonucleotide + AMP + 2 H(+). The catalysed reaction is NADH + H2O = reduced beta-nicotinamide D-ribonucleotide + AMP + 2 H(+). MRNA decapping enzyme that specifically removes the nicotinamide adenine dinucleotide (NAD) cap from a subset of mRNAs by hydrolyzing the diphosphate linkage to produce nicotinamide mononucleotide (NMN) and 5' monophosphate mRNA. The NAD-cap is present at the 5'-end of some mRNAs and stabilizes RNA against 5'-processing. Has preference for mRNAs with a 5'-end purine. Catalyzes the hydrolysis of a broad range of dinucleotide pyrophosphates. The sequence is that of NAD-capped RNA hydrolase NudC from Haemophilus influenzae (strain ATCC 51907 / DSM 11121 / KW20 / Rd).